Reading from the N-terminus, the 144-residue chain is MKLNTLSPAAGAKHAAKRVGRGIGSGLGKTAGRGHKGQKSRSGGSIRPGFEGGQMPLKQRLPKFGFTSRKSLVSGEVRLNEIAKVDGDVVTIETLKQAGLLVNTVKFAKVVLSGEISRSVTVQGLRVTKGARAAIEAAGGKIEE.

A disordered region spans residues Met-1–Lys-58. The segment covering Arg-21–Ala-31 has biased composition (gly residues).

It belongs to the universal ribosomal protein uL15 family. In terms of assembly, part of the 50S ribosomal subunit.

In terms of biological role, binds to the 23S rRNA. In Psychromonas ingrahamii (strain DSM 17664 / CCUG 51855 / 37), this protein is Large ribosomal subunit protein uL15.